The chain runs to 413 residues: Glutamate-1-semialdehyde 2,1-aminomutase (413 aa).

At lysine 260 the chain carries N6-(pyridoxal phosphate)lysine.

The protein belongs to the class-III pyridoxal-phosphate-dependent aminotransferase family. HemL subfamily. The cofactor is pyridoxal 5'-phosphate.

It localises to the cytoplasm. It carries out the reaction (S)-4-amino-5-oxopentanoate = 5-aminolevulinate. The protein operates within porphyrin-containing compound metabolism; protoporphyrin-IX biosynthesis; 5-aminolevulinate from L-glutamyl-tRNA(Glu): step 2/2. The polypeptide is Glutamate-1-semialdehyde 2,1-aminomutase (Methanoregula boonei (strain DSM 21154 / JCM 14090 / 6A8)).